The chain runs to 241 residues: tRNA pseudouridine synthase B (241 aa).

Residue Asp45 is the Nucleophile of the active site.

Belongs to the pseudouridine synthase TruB family. Type 1 subfamily.

It carries out the reaction uridine(55) in tRNA = pseudouridine(55) in tRNA. In terms of biological role, responsible for synthesis of pseudouridine from uracil-55 in the psi GC loop of transfer RNAs. This Opitutus terrae (strain DSM 11246 / JCM 15787 / PB90-1) protein is tRNA pseudouridine synthase B.